We begin with the raw amino-acid sequence, 270 residues long: Orotidine 5'-phosphate decarboxylase (270 aa).

Lysine 89 functions as the Proton donor in the catalytic mechanism.

Belongs to the OMP decarboxylase family. Type 2 subfamily.

The enzyme catalyses orotidine 5'-phosphate + H(+) = UMP + CO2. It participates in pyrimidine metabolism; UMP biosynthesis via de novo pathway; UMP from orotate: step 2/2. The protein is Orotidine 5'-phosphate decarboxylase of Dehalococcoides mccartyi (strain ATCC BAA-2266 / KCTC 15142 / 195) (Dehalococcoides ethenogenes (strain 195)).